The sequence spans 398 residues: tRNA(Ile)-lysidine synthase (398 aa).

An ATP-binding site is contributed by 25–30; the sequence is SGGVDS.

The protein belongs to the tRNA(Ile)-lysidine synthase family.

It localises to the cytoplasm. The enzyme catalyses cytidine(34) in tRNA(Ile2) + L-lysine + ATP = lysidine(34) in tRNA(Ile2) + AMP + diphosphate + H(+). Functionally, ligates lysine onto the cytidine present at position 34 of the AUA codon-specific tRNA(Ile) that contains the anticodon CAU, in an ATP-dependent manner. Cytidine is converted to lysidine, thus changing the amino acid specificity of the tRNA from methionine to isoleucine. This Francisella tularensis subsp. holarctica (strain OSU18) protein is tRNA(Ile)-lysidine synthase.